The following is a 337-amino-acid chain: Protein ABHD13 (337 aa).

A helical; Signal-anchor for type II membrane protein transmembrane segment spans residues 30–50; sequence LLALILTFHLYGGFVLLGLIL. Active-site charge relay system residues include serine 193, aspartate 268, and histidine 298. Asparagine 299 carries N-linked (GlcNAc...) asparagine glycosylation.

Belongs to the serine esterase family.

It localises to the membrane. This Danio rerio (Zebrafish) protein is Protein ABHD13.